A 357-amino-acid chain; its full sequence is Aurora kinase A- and ninein-interacting protein (357 aa).

The span at 71-91 shows a compositional bias: polar residues; that stretch reads LQPGKTNGSDQKSVSSHTESQ. The tract at residues 71-98 is disordered; sequence LQPGKTNGSDQKSVSSHTESQINKESKK. The segment at 187–357 is interaction with AURKA; it reads RKEEKGDSAR…EGNQVIRHQF (171 aa). Ser-267 and Ser-292 each carry phosphoserine. Positions 281–357 are interaction with RBBP8/CtIP; it reads KDSWSQLFTE…EGNQVIRHQF (77 aa).

It belongs to the AUNIP family. In terms of assembly, interacts (via C-terminus) with AURKA (via C-terminus). Interacts (via N-terminus) with NIN; this interaction blocks NIN phosphorylation by both AURKA and GSK3B. Identified in a complex with NIN and AURKA. Interacts with RBBP8/CtIP. Expressed in heart, skeletal muscles, placenta and testis.

The protein resides in the nucleus. It localises to the chromosome. It is found in the cytoplasm. The protein localises to the cytoskeleton. Its subcellular location is the microtubule organizing center. The protein resides in the centrosome. It localises to the spindle pole. Functionally, DNA-binding protein that accumulates at DNA double-strand breaks (DSBs) following DNA damage and promotes DNA resection and homologous recombination. Serves as a sensor of DNA damage: binds DNA with a strong preference for DNA substrates that mimic structures generated at stalled replication forks, and anchors RBBP8/CtIP to DSB sites to promote DNA end resection and ensuing homologous recombination repair. Inhibits non-homologous end joining (NHEJ). Required for the dynamic movement of AURKA at the centrosomes and spindle apparatus during the cell cycle. The polypeptide is Aurora kinase A- and ninein-interacting protein (Homo sapiens (Human)).